The following is a 409-amino-acid chain: WW domain-containing oxidoreductase (409 aa).

The segment at Met1–Asp23 is disordered. 2 WW domains span residues Asp11 to Thr44 and Gly52 to Leu86. Gly128–Gly134 is a binding site for NADP(+). Ser257 lines the substrate pocket. The active-site Proton acceptor is the Tyr288.

This sequence belongs to the short-chain dehydrogenases/reductases (SDR) family.

Its subcellular location is the cytoplasm. The protein localises to the mitochondrion. The protein resides in the golgi apparatus. It is found in the lysosome. Putative oxidoreductase. May control genotoxic stress-induced cell death. May play a role in TGFB1 signaling and TGFB1-mediated cell death. May also play a role in tumor necrosis factor (TNF)-mediated cell death. May play a role in Wnt signaling. The polypeptide is WW domain-containing oxidoreductase (Wwox) (Drosophila melanogaster (Fruit fly)).